We begin with the raw amino-acid sequence, 379 residues long: L-lactate dehydrogenase (379 aa).

The region spanning 1-379 (MIISASTDYR…LSRDSLVKIP (379 aa)) is the FMN hydroxy acid dehydrogenase domain. Residue Tyr-24 participates in substrate binding. The FMN site is built by Ser-106 and Gln-127. Tyr-129 lines the substrate pocket. Thr-155 lines the FMN pocket. Substrate is bound at residue Arg-164. Residue Lys-251 participates in FMN binding. His-275 functions as the Proton acceptor in the catalytic mechanism. Arg-278 contacts substrate. Residue 306-330 (DSGIRTGLDVVRMLALGADCTLLGR) participates in FMN binding.

The protein belongs to the FMN-dependent alpha-hydroxy acid dehydrogenase family. FMN is required as a cofactor.

The protein localises to the cell inner membrane. It catalyses the reaction (S)-lactate + A = pyruvate + AH2. Functionally, catalyzes the conversion of L-lactate to pyruvate. Is coupled to the respiratory chain. This chain is L-lactate dehydrogenase, found in Vibrio parahaemolyticus serotype O3:K6 (strain RIMD 2210633).